Consider the following 101-residue polypeptide: Small ribosomal subunit protein bS18c (101 aa).

The protein belongs to the bacterial ribosomal protein bS18 family. Part of the 30S ribosomal subunit.

The protein resides in the plastid. The protein localises to the chloroplast. The chain is Small ribosomal subunit protein bS18c from Solanum bulbocastanum (Wild potato).